A 285-amino-acid chain; its full sequence is Methylamine utilization protein MauF (285 aa).

Transmembrane regions (helical) follow at residues 39–59 (LGGL…LSQT), 63–83 (GVAV…LSTW), 120–140 (AVGA…LGFG), 144–164 (FGAL…QLGF), 184–204 (FPVW…YLTY), 209–229 (ILYL…AILL), and 265–285 (ALLD…FAAL).

The protein localises to the cell membrane. It functions in the pathway one-carbon metabolism; methylamine degradation. The chain is Methylamine utilization protein MauF (mauF) from Methylorubrum extorquens (strain ATCC 14718 / DSM 1338 / JCM 2805 / NCIMB 9133 / AM1) (Methylobacterium extorquens).